The following is a 1212-amino-acid chain: DNA-directed RNA polymerase subunit beta' (1212 aa).

4 residues coordinate Zn(2+): cysteine 60, cysteine 62, cysteine 75, and cysteine 78. Mg(2+)-binding residues include aspartate 450, aspartate 452, and aspartate 454. Zn(2+)-binding residues include cysteine 819, cysteine 893, cysteine 900, and cysteine 903.

This sequence belongs to the RNA polymerase beta' chain family. In terms of assembly, the RNAP catalytic core consists of 2 alpha, 1 beta, 1 beta' and 1 omega subunit. When a sigma factor is associated with the core the holoenzyme is formed, which can initiate transcription. It depends on Mg(2+) as a cofactor. Requires Zn(2+) as cofactor.

It carries out the reaction RNA(n) + a ribonucleoside 5'-triphosphate = RNA(n+1) + diphosphate. In terms of biological role, DNA-dependent RNA polymerase catalyzes the transcription of DNA into RNA using the four ribonucleoside triphosphates as substrates. The chain is DNA-directed RNA polymerase subunit beta' from Streptococcus thermophilus (strain ATCC BAA-491 / LMD-9).